We begin with the raw amino-acid sequence, 225 residues long: Viral late gene transcription factor 3 (225 aa).

A zinc finger lies at 7–27; it reads CSNCKHNGLITESNHEFCIFC.

The protein belongs to the nucleo-cytoplasmic large DNA viruses (NCLDVs) VLTF-3 family. Interacts with the late transcription elongation factor H5/VLTF-4. Interacts with the late transcription factors VLTF-1.

Functionally, acts with RNA polymerase to initiate transcription from late gene promoters. In Fowlpox virus (strain NVSL) (FPV), this protein is Viral late gene transcription factor 3 (VLTF3).